Consider the following 293-residue polypeptide: NAD kinase (293 aa).

The active-site Proton acceptor is the Asp74. NAD(+) contacts are provided by residues Asp74–Gly75, Asn148–Glu149, His159, Arg176, Asp178, Thr186, Thr189–Ser194, and Gln248.

Belongs to the NAD kinase family. As to quaternary structure, homodimer. The cofactor is a divalent metal cation.

The protein resides in the cytoplasm. It carries out the reaction NAD(+) + ATP = ADP + NADP(+) + H(+). Its function is as follows. Involved in the regulation of the intracellular balance of NAD and NADP, and is a key enzyme in the biosynthesis of NADP. Catalyzes specifically the phosphorylation on 2'-hydroxyl of the adenosine moiety of NAD to yield NADP. This chain is NAD kinase, found in Yersinia pestis.